Reading from the N-terminus, the 413-residue chain is Ribosomal RNA large subunit methyltransferase G (413 aa).

Residues 389–413 (EAEVEQAFDTETPHPQSALYGKPKA) form a disordered region.

The protein belongs to the methyltransferase superfamily. RlmG family.

The protein resides in the cytoplasm. It catalyses the reaction guanosine(1835) in 23S rRNA + S-adenosyl-L-methionine = N(2)-methylguanosine(1835) in 23S rRNA + S-adenosyl-L-homocysteine + H(+). Specifically methylates the guanine in position 1835 (m2G1835) of 23S rRNA. The sequence is that of Ribosomal RNA large subunit methyltransferase G from Shewanella pealeana (strain ATCC 700345 / ANG-SQ1).